Reading from the N-terminus, the 634-residue chain is MDSTARGHAPLCRTSNQRGLGTRLNPYYQSTPHQPMVQSMSNPIGSYGEQGNAQIIGSSGQVLSTGPPPGLAPVQCNDFDSCYSSCDDISHPSLSRESSDPSKIDDDQTAPMIRYPAPEVVEFATKLGYSTEQLSHVLNTIGVDSRMDDVLSELVKMGLPGGKPENSGKSGSRNSPEPIMTSSASSSSASSSSSHRPIRQSVSIATSSPATSSSTPSKYNPDPSLRAVVVDGSNVAMLHGRKEVFSCAGLRECLNYFLERGHPEVLIFIPQYRREQPRSDSPITDQHILQEIERHIIYTPSRNVNGRRVVCHDDRYILRTAELKDAVIVSNDEYRDLTRENPAWRKIVEERLLMFTFVEDKFMPPDDPSGRHGPRIESFLSKVPVVSSNPLVCPYARKCTYGNKCKFYHPERANGQHMSVTERLMKENQQKKSLGAVKSMQYEMFKNKHAALSRTQSLNVVKQLTENMSQLPPTPESPMQMPRQHMQLQQANSAPWQQHTVVQRHGSSPLTPVNRQMNVYPDMYNMSQQQNHQVLPNQHGVIGGQRPPKMTTTVSQTHLFAPSTAVWGHSELSVGPVNTGSDESLAEVRSRVHFHLCNIFPHDFVESVMAANPEEVNAPVLCELIIRAQKEYRK.

3 disordered regions span residues 1-33, 90-113, and 156-223; these read MDST…STPH, SHPS…APMI, and KMGL…NPDP. The segment covering 97-106 has biased composition (basic and acidic residues); that stretch reads ESSDPSKIDD. 2 stretches are compositionally biased toward low complexity: residues 182–194 and 201–217; these read SSAS…SSSS and SVSI…STPS. The RNase NYN domain occupies 225–377; sequence LRAVVVDGSN…PSGRHGPRIE (153 aa). Aspartate 314 is a Mg(2+) binding site. The segment at 387-412 adopts a C3H1-type zinc-finger fold; the sequence is SSNPLVCPYARKCTYGNKCKFYHPER.

This sequence belongs to the ZC3H12 family. Mg(2+) serves as cofactor. Expressed in the intestinal cells adjacent to the pharynx.

The protein localises to the cytoplasm. Functionally, endonuclease which binds to the 3'UTR of target mRNAs and induces degradation of the transcript. Acts together with rle-1 to repress the expression of the transcription factor ets-4 by binding to the conserved ADE (alternate decay element) and RCE (REGE-1 cleavage element) stem loop structure in its 3'UTR, which controls the expression of genes in the IIS and TORC1 pathways, including those involved in lipid metabolism and autophagosome formation. May play a role in the clearance of apoptotic cell corpses. The protein is Endoribonuclease rege-1 of Caenorhabditis elegans.